A 138-amino-acid polypeptide reads, in one-letter code: Large ribosomal subunit protein bL17 (138 aa).

The protein belongs to the bacterial ribosomal protein bL17 family. In terms of assembly, part of the 50S ribosomal subunit. Contacts protein L32.

The protein is Large ribosomal subunit protein bL17 of Buchnera aphidicola subsp. Schizaphis graminum (strain Sg).